The following is a 269-amino-acid chain: Protein BASIC PENTACYSTEINE3 (269 aa).

It belongs to the BBR/BPC family. As to expression, expressed in seedlings, leaves and pistils. Detected in the base of flowers and tips of carpels, in petal vasculature, in anthers, in young rosette, in the lateral and primary roots, and in the gynobasal portion of the ovule.

The protein localises to the nucleus. Transcriptional regulator that specifically binds to GA-rich elements (GAGA-repeats) present in regulatory sequences of genes involved in developmental processes. The polypeptide is Protein BASIC PENTACYSTEINE3 (BPC3) (Arabidopsis thaliana (Mouse-ear cress)).